A 165-amino-acid chain; its full sequence is Large ribosomal subunit protein uL11 (165 aa).

The protein belongs to the universal ribosomal protein uL11 family. Component of the large ribosomal subunit. Mature ribosomes consist of a small (40S) and a large (60S) subunit. The 40S subunit contains about 32 different proteins and 1 molecule of RNA (18S). The 60S subunit contains 45 different proteins and 3 molecules of RNA (25S, 5.8S and 5S).

It is found in the cytoplasm. Functionally, component of the ribosome, a large ribonucleoprotein complex responsible for the synthesis of proteins in the cell. The small ribosomal subunit (SSU) binds messenger RNAs (mRNAs) and translates the encoded message by selecting cognate aminoacyl-transfer RNA (tRNA) molecules. The large subunit (LSU) contains the ribosomal catalytic site termed the peptidyl transferase center (PTC), which catalyzes the formation of peptide bonds, thereby polymerizing the amino acids delivered by tRNAs into a polypeptide chain. The nascent polypeptides leave the ribosome through a tunnel in the LSU and interact with protein factors that function in enzymatic processing, targeting, and the membrane insertion of nascent chains at the exit of the ribosomal tunnel. This is Large ribosomal subunit protein uL11 (RPL12) from Candida albicans (strain SC5314 / ATCC MYA-2876) (Yeast).